The primary structure comprises 185 residues: Threonylcarbamoyl-AMP synthase (185 aa).

A YrdC-like domain is found at 4 to 185; it reads SFRAQCAARV…LVTGQVIRPA (182 aa).

It belongs to the SUA5 family. TsaC subfamily.

The protein resides in the cytoplasm. The enzyme catalyses L-threonine + hydrogencarbonate + ATP = L-threonylcarbamoyladenylate + diphosphate + H2O. Required for the formation of a threonylcarbamoyl group on adenosine at position 37 (t(6)A37) in tRNAs that read codons beginning with adenine. Catalyzes the conversion of L-threonine, HCO(3)(-)/CO(2) and ATP to give threonylcarbamoyl-AMP (TC-AMP) as the acyladenylate intermediate, with the release of diphosphate. The protein is Threonylcarbamoyl-AMP synthase of Pseudomonas aeruginosa (strain UCBPP-PA14).